The chain runs to 295 residues: Accessory protein VasW (295 aa).

Plays an accessory role in VasX-mediated bacterial killing. The chain is Accessory protein VasW from Vibrio cholerae serotype O1 (strain ATCC 39315 / El Tor Inaba N16961).